The chain runs to 1551 residues: MSIEKVSILGKESIHVGYGIQSHIVEETIKCLASSTYVIISDTNMSKTPTYEKLQDSFQKELAKQRPQSRLLTYLIPPGENHKNRETKAEVEDFLLQQGCTRDTVILAVGGGVIGDMIGFVAATFMRGVRVVQVPTTLLSMVDSSVGGKTAIDTELGKNFIGAFHQPEFVFCDVSFLQTLPKRQLINGMAEVVKTAAIWDETEFTRLESFAKRFLAEISAPTPNLESIKDELIKTVLGSVRVKAFVVSADEKEGGLRNLLNFGHTIGHAIEAILTPEALHGECVSIGMIKEAELSRYLGILPPSAVARLSKCLAAYGLPISVDEKIFSKIIGAKKNNLKIDSLIKKMLIDKKNDGSKIRCVLLESIGKCYESKAHQIFKEDIQVVMTDEVFVHPFANRHPESVSITPPGSKSISNRALILAALGEGTTRIKNLLHSDDTKHMLDAVVLMKGATVSFEDSGDTVVVQGHGGKLFACKEEIYLGNAGTASRFLTAVAALVNSTQDEKSVTLTGNARMQERPIAALVDALTTNGSKVDYLNKQGSLPLKIEAGNGFKGGRIELAATTSSQYVSAILMCAPYAEKEVTLSLVGGKPISQLYIDMTIAMMKDFGVDVTKSETEEYTYHIPKSVYQNPQEYVVESDASSATYPLAFAALTNSSCTIPNIGSSSLQGDARFAVDVLKPMGCTVEQTSKSTTVTGPPIGTLKALPEIDMEPMTDAFLTASVVAAVSQGTTTISGIANQRVKECNRIKAMVDELAKFGVSADETEDGIRIHGVQLRDLKTPGGRGVKTYDDHRVAMSFSLLAGLCKDPVLIQERSTTGKTWPGWWDVLHSKFNAKLEGHEYIRQRSGSLRNGDRSIVIIGMRAAGKTTLSRWLAEHLNFKLLDLDQYLEKKLAVDIKLLVKEKGWDYFREKETEVLNECLEKFGKGHILATGGGIVEGEKPREALKNYTKSGGIVLHLHRDLKETVNFLSKDPTRPAYSDDIEEVWKRREKWYHECSNYHFYSTHCTSEAEFANLKLVFAKFVSKITGDDTFVLPATRSTFVTLTYPDLRKVPSLIKDVSETSNAVELRVDLLANQETAYIAEQIGLLRSVATDLPILYTVRTKSQCGQYPDEDEEGMRKLLMFGLKMGVDIIDLQLISSPSTIAEVISKRGHTKIIASHHDFTGDLKWDNVEWKNKYAQGVSIDADFVKLVGMAKTFDDNLLLENFRRQNTEKPLIGINMGPQGKLSRVLNKVLTPVTHELITDKPIGVGQLSLKEINQALFQIGGLLEKEFWVVGSPVSHSRSPALHNAAYAALGLPYKFDIFETDDAEKVYSQLMQKPTFGGLAVTIPLKLDIKKYCTELSESAKLIGAVNTVTPIADGRKGFLGDNTDWIGIANSFKKADFALASGVSNGLVVGGGGTSRAAIFALHSLGCQKIYLLNRTESKLQDLVDSFPDYDLEILLEKNASSVSIGLVVSCVPGDKPLDETLMKKLDGVLSNNKGDKQTRPLLLEAAYKPRVTPIMELAKEKYDWTVIPGVEMLVNQGEAQFKLHTGYTAPYKVIHSAVLNE.

The segment at 1–379 is 3-dehydroquinate synthase; that stretch reads MSIEKVSILG…YESKAHQIFK (379 aa). NAD(+) contacts are provided by residues 42–44, 80–83, 111–113, and aspartate 116; these read DTN, ENHK, and GGV. Arginine 127 is a binding site for 7-phospho-2-dehydro-3-deoxy-D-arabino-heptonate. An NAD(+)-binding site is contributed by 136–137; it reads TT. 7-phospho-2-dehydro-3-deoxy-D-arabino-heptonate contacts are provided by aspartate 143 and lysine 149. Lysine 158 contributes to the NAD(+) binding site. Asparagine 159 is a 7-phospho-2-dehydro-3-deoxy-D-arabino-heptonate binding site. NAD(+) contacts are provided by residues 176–179 and asparagine 187; that span reads FLQT. Glutamate 191 is a Zn(2+) binding site. Residues 191–194 and lysine 243 contribute to the 7-phospho-2-dehydro-3-deoxy-D-arabino-heptonate site; that span reads EVVK. Glutamate 253 serves as the catalytic Proton acceptor; for 3-dehydroquinate synthase activity. Residues 257–261 and histidine 264 each bind 7-phospho-2-dehydro-3-deoxy-D-arabino-heptonate; that span reads RNLLN. Position 264 (histidine 264) interacts with Zn(2+). Residue histidine 268 is the Proton acceptor; for 3-dehydroquinate synthase activity of the active site. Histidine 280 and lysine 351 together coordinate 7-phospho-2-dehydro-3-deoxy-D-arabino-heptonate. Zn(2+) is bound at residue histidine 280. An EPSP synthase region spans residues 392–835; it reads VHPFANRHPE…WDVLHSKFNA (444 aa). Positions 854–1044 are shikimate kinase; sequence DRSIVIIGMR…LPATRSTFVT (191 aa). 861–868 contributes to the ATP binding site; the sequence is GMRAAGKT. Residues 1045–1258 are 3-dehydroquinase; that stretch reads LTYPDLRKVP…IGVGQLSLKE (214 aa). The active-site Proton acceptor; for 3-dehydroquinate dehydratase activity is histidine 1162. Lysine 1191 acts as the Schiff-base intermediate with substrate; for 3-dehydroquinate dehydratase activity in catalysis. The interval 1271 to 1551 is shikimate dehydrogenase; the sequence is EKEFWVVGSP…KVIHSAVLNE (281 aa).

This sequence in the N-terminal section; belongs to the sugar phosphate cyclases superfamily. Dehydroquinate synthase family. The protein in the 2nd section; belongs to the EPSP synthase family. It in the 3rd section; belongs to the shikimate kinase family. In the 4th section; belongs to the type-I 3-dehydroquinase family. This sequence in the C-terminal section; belongs to the shikimate dehydrogenase family. As to quaternary structure, homodimer. Zn(2+) serves as cofactor.

The protein resides in the cytoplasm. It catalyses the reaction 7-phospho-2-dehydro-3-deoxy-D-arabino-heptonate = 3-dehydroquinate + phosphate. The enzyme catalyses 3-dehydroquinate = 3-dehydroshikimate + H2O. The catalysed reaction is shikimate + NADP(+) = 3-dehydroshikimate + NADPH + H(+). It carries out the reaction shikimate + ATP = 3-phosphoshikimate + ADP + H(+). It catalyses the reaction 3-phosphoshikimate + phosphoenolpyruvate = 5-O-(1-carboxyvinyl)-3-phosphoshikimate + phosphate. Its pathway is metabolic intermediate biosynthesis; chorismate biosynthesis; chorismate from D-erythrose 4-phosphate and phosphoenolpyruvate: step 2/7. The protein operates within metabolic intermediate biosynthesis; chorismate biosynthesis; chorismate from D-erythrose 4-phosphate and phosphoenolpyruvate: step 3/7. It functions in the pathway metabolic intermediate biosynthesis; chorismate biosynthesis; chorismate from D-erythrose 4-phosphate and phosphoenolpyruvate: step 4/7. It participates in metabolic intermediate biosynthesis; chorismate biosynthesis; chorismate from D-erythrose 4-phosphate and phosphoenolpyruvate: step 5/7. Its pathway is metabolic intermediate biosynthesis; chorismate biosynthesis; chorismate from D-erythrose 4-phosphate and phosphoenolpyruvate: step 6/7. Functionally, the AROM polypeptide catalyzes 5 consecutive enzymatic reactions in prechorismate polyaromatic amino acid biosynthesis. This Lodderomyces elongisporus (strain ATCC 11503 / CBS 2605 / JCM 1781 / NBRC 1676 / NRRL YB-4239) (Yeast) protein is Pentafunctional AROM polypeptide 1.